The following is a 160-amino-acid chain: Ribosomal RNA large subunit methyltransferase H (160 aa).

S-adenosyl-L-methionine is bound by residues Leu77, Gly109, and 128–133 (FSRLTF).

It belongs to the RNA methyltransferase RlmH family. As to quaternary structure, homodimer.

The protein localises to the cytoplasm. It catalyses the reaction pseudouridine(1915) in 23S rRNA + S-adenosyl-L-methionine = N(3)-methylpseudouridine(1915) in 23S rRNA + S-adenosyl-L-homocysteine + H(+). In terms of biological role, specifically methylates the pseudouridine at position 1915 (m3Psi1915) in 23S rRNA. The sequence is that of Ribosomal RNA large subunit methyltransferase H from Desulfitobacterium hafniense (strain DSM 10664 / DCB-2).